A 228-amino-acid polypeptide reads, in one-letter code: Ribonuclease H (228 aa).

The 141-residue stretch at Gly-2 to Arg-142 folds into the RNase H type-1 domain. Residues Asp-11, Glu-49, Asp-71, and Asp-134 each coordinate Mg(2+).

The protein belongs to the RNase H family. Monomer. Mg(2+) serves as cofactor.

The protein resides in the cytoplasm. The enzyme catalyses Endonucleolytic cleavage to 5'-phosphomonoester.. In terms of biological role, endonuclease that specifically degrades the RNA of RNA-DNA hybrids. The sequence is that of Ribonuclease H from Methylorubrum extorquens (strain PA1) (Methylobacterium extorquens).